Consider the following 173-residue polypeptide: ATP-dependent protease subunit HslV (173 aa).

Residue threonine 2 is part of the active site. Glycine 158, aspartate 161, and serine 164 together coordinate Na(+).

The protein belongs to the peptidase T1B family. HslV subfamily. In terms of assembly, a double ring-shaped homohexamer of HslV is capped on each side by a ring-shaped HslU homohexamer. The assembly of the HslU/HslV complex is dependent on binding of ATP.

The protein resides in the cytoplasm. The enzyme catalyses ATP-dependent cleavage of peptide bonds with broad specificity.. Allosterically activated by HslU binding. Protease subunit of a proteasome-like degradation complex believed to be a general protein degrading machinery. This Glaesserella parasuis serovar 5 (strain SH0165) (Haemophilus parasuis) protein is ATP-dependent protease subunit HslV.